A 166-amino-acid polypeptide reads, in one-letter code: Sec-independent protein translocase protein TatB (166 aa).

Residues 2 to 22 (FNDIGALELLTLGVLAVLVFG) traverse the membrane as a helical segment. Residues 110–166 (TPAASDTANSAVNGSAGAAADGVTTSLTKTGETTPDLLKKAPQQAQPERPPFDADAT) are disordered. A compositionally biased stretch (low complexity) spans 117 to 129 (ANSAVNGSAGAAA). The segment covering 132–142 (VTTSLTKTGET) has biased composition (polar residues).

The protein belongs to the TatB family. As to quaternary structure, the Tat system comprises two distinct complexes: a TatABC complex, containing multiple copies of TatA, TatB and TatC subunits, and a separate TatA complex, containing only TatA subunits. Substrates initially bind to the TatABC complex, which probably triggers association of the separate TatA complex to form the active translocon.

It is found in the cell membrane. In terms of biological role, part of the twin-arginine translocation (Tat) system that transports large folded proteins containing a characteristic twin-arginine motif in their signal peptide across membranes. Together with TatC, TatB is part of a receptor directly interacting with Tat signal peptides. TatB may form an oligomeric binding site that transiently accommodates folded Tat precursor proteins before their translocation. In Streptomyces griseus subsp. griseus (strain JCM 4626 / CBS 651.72 / NBRC 13350 / KCC S-0626 / ISP 5235), this protein is Sec-independent protein translocase protein TatB.